Here is a 1202-residue protein sequence, read N- to C-terminus: Liprin-alpha-1 (1202 aa).

Residues 1 to 33 (MMCEVMPTISEAEGPPGGGGGHGSGSPSQPDAD) are disordered. The span at 15–24 (PPGGGGGHGS) shows a compositional bias: gly residues. Residues 34–141 (SHFEQLMVSM…VSRHERSLRM (108 aa)) are a coiled coil. Phosphoserine is present on S150. The stretch at 176 to 214 (EKVRERLRVALERCSLLEEELGATHKELMILKEQNNQKK) forms a coiled coil. 2 disordered regions span residues 224 to 245 (NHEQ…SLSH) and 426 to 446 (KNQE…HNKR). T230 carries the phosphothreonine modification. S239, S242, and S244 each carry phosphoserine. Coiled-coil stretches lie at residues 249–521 (LAKV…GASL) and 623–669 (ADAH…SGSL). S448 carries the phosphoserine modification. Residues 651 to 662 (ENTEQRAEEIES) show a composition bias toward basic and acidic residues. The tract at residues 651 to 855 (ENTEQRAEEI…SKLGGQAEKN (205 aa)) is disordered. Phosphoserine is present on residues S666, S668, and S693. Low complexity predominate over residues 686–700 (ASSLASSSPPGSGRS). The segment covering 725–736 (SREEVRDDKTTI) has biased composition (basic and acidic residues). The residue at position 761 (T761) is a Phosphothreonine. Residues 762-771 (VSHEDIRDIR) are compositionally biased toward basic and acidic residues. S763 carries the post-translational modification Phosphoserine. Residues 832-841 (VSETDNSSQD) show a composition bias toward polar residues. Residues 847 to 871 (KLGGQAEKNRKLQKKHELLEEARRQ) adopt a coiled-coil conformation. 3 SAM domains span residues 878 to 944 (WDGP…IMSL), 963 to 1027 (NHEW…LRRL), and 1051 to 1120 (WSND…LLVM). Residues 1021-1050 (IMCLRRLNYDRKELERKREESQSEIKDVLV) adopt a coiled-coil conformation. The residue at position 1133 (S1133) is a Phosphoserine. T1159 carries the post-translational modification Phosphothreonine. The interval 1163–1202 (NFRVTSSMSSPSMQPKKMQMDGNVSGTQRLDSATVRTYSC) is disordered. A compositionally biased stretch (low complexity) spans 1168-1179 (SSMSSPSMQPKK). The segment covering 1184–1202 (GNVSGTQRLDSATVRTYSC) has biased composition (polar residues).

The protein belongs to the liprin family. Liprin-alpha subfamily. In terms of assembly, homodimer. Interacts with PTPRF (via D2 domain). Part of a cortical microtubule stabilization complex (CMSC) composed of KANK1, PPFIA1, PPFIBP1, ERC1/ELKS, PHLDB2/LL5beta, CLASPs, KIF21A and possibly additional interactors; within CMSCs KANK1 and PHLDB2/LL5beta seem to be the core components for recruiting microtubule-binding proteins KIF21A and CLASPs, whereas PPFIA1, PPFIBP1 and ERC1/ELKS serve as scaffolds for protein clustering. Ubiquitous.

It is found in the cytoplasm. Its subcellular location is the cell cortex. Its function is as follows. May regulate the disassembly of focal adhesions. May localize receptor-like tyrosine phosphatases type 2A at specific sites on the plasma membrane, possibly regulating their interaction with the extracellular environment and their association with substrates. This chain is Liprin-alpha-1 (PPFIA1), found in Homo sapiens (Human).